A 213-amino-acid polypeptide reads, in one-letter code: Uridine kinase (213 aa).

14-21 (GASASGKS) is an ATP binding site.

Belongs to the uridine kinase family.

It localises to the cytoplasm. It carries out the reaction uridine + ATP = UMP + ADP + H(+). The enzyme catalyses cytidine + ATP = CMP + ADP + H(+). The protein operates within pyrimidine metabolism; CTP biosynthesis via salvage pathway; CTP from cytidine: step 1/3. It functions in the pathway pyrimidine metabolism; UMP biosynthesis via salvage pathway; UMP from uridine: step 1/1. In Vibrio parahaemolyticus serotype O3:K6 (strain RIMD 2210633), this protein is Uridine kinase.